The sequence spans 151 residues: Putative pre-16S rRNA nuclease (151 aa).

Belongs to the YqgF nuclease family.

It is found in the cytoplasm. In terms of biological role, could be a nuclease involved in processing of the 5'-end of pre-16S rRNA. This is Putative pre-16S rRNA nuclease from Gloeothece citriformis (strain PCC 7424) (Cyanothece sp. (strain PCC 7424)).